The sequence spans 228 residues: Tol-Pal system protein TolQ (228 aa).

3 consecutive transmembrane segments (helical) span residues 16 to 36 (IVVQLVIVILISFSIISWAII), 137 to 157 (VSPYIGLFGTVWGIMHAFMAL), and 172 to 192 (IAEALIATAIGLFAAIPAVMA).

The protein belongs to the ExbB/TolQ family. The Tol-Pal system is composed of five core proteins: the inner membrane proteins TolA, TolQ and TolR, the periplasmic protein TolB and the outer membrane protein Pal. They form a network linking the inner and outer membranes and the peptidoglycan layer.

The protein localises to the cell inner membrane. Functionally, part of the Tol-Pal system, which plays a role in outer membrane invagination during cell division and is important for maintaining outer membrane integrity. The polypeptide is Tol-Pal system protein TolQ (Haemophilus influenzae (strain ATCC 51907 / DSM 11121 / KW20 / Rd)).